Reading from the N-terminus, the 83-residue chain is Large ribosomal subunit protein eL43 (83 aa).

Residues C38, C41, C56, and C59 each coordinate Zn(2+). The segment at 38 to 59 adopts a C4-type zinc-finger fold; it reads CPVCGRKAVKRISTGIWQCQKC.

It belongs to the eukaryotic ribosomal protein eL43 family. Putative zinc-binding subfamily. In terms of assembly, part of the 50S ribosomal subunit. It depends on Zn(2+) as a cofactor.

Functionally, binds to the 23S rRNA. The chain is Large ribosomal subunit protein eL43 from Pyrococcus furiosus (strain ATCC 43587 / DSM 3638 / JCM 8422 / Vc1).